The following is a 211-amino-acid chain: DNA/RNA-binding protein ALBA2 (211 aa).

Positions Asn84–Gly99 are enriched in basic and acidic residues. A disordered region spans residues Asn84–Asn121. Residues Asp100–Glu113 show a composition bias toward acidic residues.

Belongs to the histone-like Alba family. As to quaternary structure, identified in a TARE6-associated complex consisting of over 30 proteins and including ALBA1, ALBA2 and ALBA4; the complex binds to the non-coding subtelomeric repeat region TARE6.

The protein resides in the nucleus. Its subcellular location is the chromosome. The protein localises to the telomere. It localises to the cytoplasm. Its function is as follows. Possesses DNA- and RNA-binding activities. Binds to DNA with relaxed sequence specificity. Associates with the subtelomeric TARE6 repeats. This Plasmodium falciparum (isolate 3D7) protein is DNA/RNA-binding protein ALBA2.